The sequence spans 534 residues: Cytochrome P450 monooxygenase vrtK (534 aa).

Cysteine 448 contributes to the heme binding site.

This sequence belongs to the cytochrome P450 family. Heme is required as a cofactor.

The protein operates within secondary metabolite biosynthesis; terpenoid biosynthesis. Cytochrome P450 monooxygenase; part of the gene cluster that mediates the biosynthesis of viridicatumtoxin, a tetracycline-like fungal meroterpenoid with a unique, fused spirobicyclic ring system. The first step of the pathway is the production of the malonamoyl-CoA starter unit for the polyketide synthase vrtA. The aldolase vrtJ may be involved in the synthesis of the malonamate substrate for malonamoyl-CoA synthetase vrtB. The polyketide synthase vrtA then may utilize the malonamoyl-CoA starter unit, followed by sequential condensation of eight malonyl-CoA units to form the polyketide backbone. The cyclization of the last ring could be mediated by the lactamase-like protein vrtG. The proposed post-PKS tailoring steps are a hydroxylation at C5 catalyzed the cytochrome P450 monooxygenase vrtE, a hydroxylation at C12a catalyzed by VrtH and/or VrtI, and an O-methylation by the O-methyltransferase vrtF. VrtC is then proposed to catalyze the transfer of a geranyl group synthesized by vrtD to the aromatic C ring of the tetracyclic polyketide intermediate of viridicatumtoxin to yield previridicatumtoxin. Finally, the cytochrome P450 monooxygenase vrtK catalyzes the spirocyclization of the geranyl moiety of previridicatumtoxin to afford viridicatumtoxin. This is Cytochrome P450 monooxygenase vrtK from Penicillium aethiopicum.